The following is a 977-amino-acid chain: Serine/threonine-protein kinase/endoribonuclease IRE1 (977 aa).

A signal peptide spans 1-18 (MPARRLLLLLTLLLPGLG). The Lumenal portion of the chain corresponds to 19–443 (IFGSTSTVTL…EAPVDSMLKD (425 aa)). Asparagine 176 carries an N-linked (GlcNAc...) asparagine glycan. The span at 410–419 (TSENAPTTVS) shows a compositional bias: polar residues. Residues 410 to 434 (TSENAPTTVSRDVEEKPAHAPARPE) form a disordered region. A helical membrane pass occupies residues 444-464 (MATIILSTFLLIGWVAFIITY). The Cytoplasmic segment spans residues 465-977 (PLSMHQQQQL…PQPPVTPDAL (513 aa)). The tract at residues 491–559 (QQQQQLPFHP…PSLEQDDGDE (69 aa)) is disordered. Low complexity predominate over residues 513 to 552 (TSGPYSESSGTSSPSTSPRASNHSLCSGSSASKAGSSPSL). The 262-residue stretch at 571–832 (FCPKDVLGHG…AKHVLKHPFF (262 aa)) folds into the Protein kinase domain. ATP contacts are provided by residues 577 to 585 (LGHGAEGTI), lysine 599, and 643 to 645 (ELC). Catalysis depends on aspartate 688, which acts as the Proton acceptor. ATP is bound by residues 690–693 (KPHN) and aspartate 711. Serine 724 and serine 729 each carry phosphoserine. A KEN domain is found at 835–963 (LEKQLQFFQD…ERLFQPYYFH (129 aa)). Residues 906–907 (NK) are interacts with hydroxy-aryl-aldehyde inhibitors. At threonine 973 the chain carries Phosphothreonine.

Belongs to the protein kinase superfamily. Ser/Thr protein kinase family. In terms of assembly, monomer. Homodimer; disulfide-linked; homodimerization takes place in response to endoplasmic reticulum stress and promotes activation of the kinase and endoribonuclease activities. Dimer formation is driven by hydrophobic interactions within the N-terminal luminal domains and stabilized by disulfide bridges. Interacts (via the luminal region) with DNAJB9/ERdj4; interaction takes place in unstressed cells and promotes recruitment of HSPA5/BiP. Interacts (via the luminal region) with HSPA5/BiP; HSPA5/BiP is a negative regulator of the unfolded protein response (UPR) that prevents homodimerization of ERN1/IRE1 and subsequent activation of the protein. Interaction with HSPA5 also competitively inhibits ERN1 interaction with MANF. Interacts with PDIA6, a negative regulator of the UPR; the interaction is direct and disrupts homodimerization. Interacts with DAB2IP (via PH domain); the interaction occurs in a endoplasmic reticulum stress-induced dependent manner and is required for subsequent recruitment of TRAF2 to ERN1/IRE1. Interacts with TAOK3 and TRAF2. Interacts with RNF13. Interacts with LACC1. Interacts (when unphosphorylated) with DDRGK1; interaction is dependent on UFM1 and takes place in response to endoplasmic reticulum stress, regulating ERN1/IRE1-alpha stability. Interacts (via N-terminus) with P4HB/PDIA1; the interaction is enhanced by phosphorylation of P4HB by FAM20C in response to endoplasmic reticulum stress and results in attenuation of ERN1 activity. Interacts with TMBIM6; this interaction inhibits ERN1 activity. Interacts (via luminal domain) with MANF (via C-terminus); the interaction is decreased in the presence of increasing concentrations of Ca(2+). It depends on Mg(2+) as a cofactor. Post-translationally, autophosphorylated following homodimerization. Autophosphorylation promotes activation of the endoribonuclease domain. In response to ER stress, phosphorylated at Ser-724, Ser-729 and possibly Ser-726; phosphorylation promotes oligomerization and endoribonuclease activity. Dephosphorylated at Ser-724, Ser-729 and possibly Ser-726 by RPAP2 to abort failed ER-stress adaptation and trigger apoptosis. Phosphorylated at Ser-724; in response to the ER stressor tunicamycin. In terms of processing, ADP-ribosylated by PARP16 upon ER stress, which increases both kinase and endonuclease activities. As to expression, ubiquitously expressed. High levels observed in pancreatic tissue.

It localises to the endoplasmic reticulum membrane. The catalysed reaction is L-seryl-[protein] + ATP = O-phospho-L-seryl-[protein] + ADP + H(+). It carries out the reaction L-threonyl-[protein] + ATP = O-phospho-L-threonyl-[protein] + ADP + H(+). The kinase domain is activated by trans-autophosphorylation following homodimerization. Kinase activity is required for activation of the endoribonuclease domain. Endoribonuclease activity is specifically inhibited by hydroxy-aryl-aldehydes (HAA). Functionally, serine/threonine-protein kinase and endoribonuclease that acts as a key sensor for the endoplasmic reticulum unfolded protein response (UPR). In unstressed cells, the endoplasmic reticulum luminal domain is maintained in its inactive monomeric state by binding to the endoplasmic reticulum chaperone HSPA5/BiP. Accumulation of misfolded proteins in the endoplasmic reticulum causes release of HSPA5/BiP, allowing the luminal domain to homodimerize, promoting autophosphorylation of the kinase domain and subsequent activation of the endoribonuclease activity. The endoribonuclease activity is specific for XBP1 mRNA and excises 26 nucleotides from XBP1 mRNA. The resulting spliced transcript of XBP1 encodes a transcriptional activator protein that up-regulates expression of UPR target genes. Acts as an upstream signal for ER stress-induced GORASP2-mediated unconventional (ER/Golgi-independent) trafficking of CFTR to cell membrane by modulating the expression and localization of SEC16A. This Homo sapiens (Human) protein is Serine/threonine-protein kinase/endoribonuclease IRE1.